The sequence spans 76 residues: MRHCACLFHLFLIGFLCNVYFSACTHTSSLKESDDESPRAEHWGSDGKRILRANDSEFLLTEERILLILLWSPLGR.

Residues 1 to 24 (MRHCACLFHLFLIGFLCNVYFSAC) form the signal peptide. The short motif at 49 to 64 (RILRANDSEFLLTEER) is the RxLR-dEER element. N-linked (GlcNAc...) asparagine glycosylation is present at asparagine 54.

It belongs to the RxLR effector family.

It localises to the secreted. It is found in the host nucleus. The protein resides in the host cytoplasm. In terms of biological role, secreted effector that dos not suppress the host cell death induced by cell death-inducing proteins. This Plasmopara viticola (Downy mildew of grapevine) protein is Secreted RxLR effector protein 31.